Consider the following 240-residue polypeptide: Proteasome subunit beta type-1 (240 aa).

The residue at position 1 (methionine 1) is an N-acetylmethionine. The propeptide occupies 1–27; sequence MLSTAAYRDVERELGMGPHGSAGPVQL. O-linked (GlcNAc) serine glycosylation is present at serine 57. 2 positions are modified to phosphoserine: serine 61 and serine 67. Tyrosine 149 is modified (phosphotyrosine). A Phosphoserine modification is found at serine 161. Lysine 203 carries the post-translational modification N6-acetyllysine. Serine 208 carries O-linked (GlcNAc) serine glycosylation.

The protein belongs to the peptidase T1B family. In terms of assembly, the 26S proteasome consists of a 20S proteasome core and two 19S regulatory subunits. The 20S proteasome core is a barrel-shaped complex made of 28 subunits that are arranged in four stacked rings. The two outer rings are each formed by seven alpha subunits, and the two inner rings are formed by seven beta subunits. The proteolytic activity is exerted by three beta-subunits PSMB5, PSMB6 and PSMB7. Interacts with SERPINB2. Interacts with RFPL4A. Detected in liver (at protein level).

The protein localises to the cytoplasm. It localises to the nucleus. Its function is as follows. Non-catalytic component of the 20S core proteasome complex involved in the proteolytic degradation of most intracellular proteins. This complex plays numerous essential roles within the cell by associating with different regulatory particles. Associated with two 19S regulatory particles, forms the 26S proteasome and thus participates in the ATP-dependent degradation of ubiquitinated proteins. The 26S proteasome plays a key role in the maintenance of protein homeostasis by removing misfolded or damaged proteins that could impair cellular functions, and by removing proteins whose functions are no longer required. Associated with the PA200 or PA28, the 20S proteasome mediates ubiquitin-independent protein degradation. This type of proteolysis is required in several pathways including spermatogenesis (20S-PA200 complex) or generation of a subset of MHC class I-presented antigenic peptides (20S-PA28 complex). The polypeptide is Proteasome subunit beta type-1 (Psmb1) (Mus musculus (Mouse)).